The following is a 338-amino-acid chain: Anthranilate phosphoribosyltransferase (338 aa).

Residues G82, 85–86 (GD), T90, 92–95 (NIST), 110–118 (KHGNRAASS), and S122 contribute to the 5-phospho-alpha-D-ribose 1-diphosphate site. G82 contributes to the anthranilate binding site. Residue S94 participates in Mg(2+) binding. Residue N113 participates in anthranilate binding. R168 serves as a coordination point for anthranilate. Mg(2+) contacts are provided by D226 and E227.

This sequence belongs to the anthranilate phosphoribosyltransferase family. Homodimer. Requires Mg(2+) as cofactor.

It carries out the reaction N-(5-phospho-beta-D-ribosyl)anthranilate + diphosphate = 5-phospho-alpha-D-ribose 1-diphosphate + anthranilate. It functions in the pathway amino-acid biosynthesis; L-tryptophan biosynthesis; L-tryptophan from chorismate: step 2/5. Catalyzes the transfer of the phosphoribosyl group of 5-phosphorylribose-1-pyrophosphate (PRPP) to anthranilate to yield N-(5'-phosphoribosyl)-anthranilate (PRA). In Deinococcus radiodurans (strain ATCC 13939 / DSM 20539 / JCM 16871 / CCUG 27074 / LMG 4051 / NBRC 15346 / NCIMB 9279 / VKM B-1422 / R1), this protein is Anthranilate phosphoribosyltransferase.